We begin with the raw amino-acid sequence, 460 residues long: Bifunctional protein GlmU (460 aa).

Residues 1–229 form a pyrophosphorylase region; the sequence is MSKLNIVVLA…VWETTGVNSK (229 aa). Residues 9 to 12, Lys23, Gln74, 79 to 80, 101 to 103, Gly138, Glu154, Asn169, and Asn227 contribute to the UDP-N-acetyl-alpha-D-glucosamine site; these read LAAG, GT, and YGD. A Mg(2+)-binding site is contributed by Asp103. Asn227 lines the Mg(2+) pocket. Residues 230–250 are linker; it reads VQLAGLERIYQTAQANKLLEQ. The segment at 251–460 is N-acetyltransferase; that stretch reads GVALADPARI…RPVKKPKPKN (210 aa). UDP-N-acetyl-alpha-D-glucosamine is bound by residues Arg333 and Lys351. His363 (proton acceptor) is an active-site residue. UDP-N-acetyl-alpha-D-glucosamine contacts are provided by Tyr366 and Asn377. Acetyl-CoA contacts are provided by residues Ala380, 386–387, Ser405, Ala423, and Arg440; that span reads NY.

It in the N-terminal section; belongs to the N-acetylglucosamine-1-phosphate uridyltransferase family. In the C-terminal section; belongs to the transferase hexapeptide repeat family. As to quaternary structure, homotrimer. Requires Mg(2+) as cofactor.

The protein localises to the cytoplasm. It catalyses the reaction alpha-D-glucosamine 1-phosphate + acetyl-CoA = N-acetyl-alpha-D-glucosamine 1-phosphate + CoA + H(+). The catalysed reaction is N-acetyl-alpha-D-glucosamine 1-phosphate + UTP + H(+) = UDP-N-acetyl-alpha-D-glucosamine + diphosphate. It participates in nucleotide-sugar biosynthesis; UDP-N-acetyl-alpha-D-glucosamine biosynthesis; N-acetyl-alpha-D-glucosamine 1-phosphate from alpha-D-glucosamine 6-phosphate (route II): step 2/2. The protein operates within nucleotide-sugar biosynthesis; UDP-N-acetyl-alpha-D-glucosamine biosynthesis; UDP-N-acetyl-alpha-D-glucosamine from N-acetyl-alpha-D-glucosamine 1-phosphate: step 1/1. It functions in the pathway bacterial outer membrane biogenesis; LPS lipid A biosynthesis. Its function is as follows. Catalyzes the last two sequential reactions in the de novo biosynthetic pathway for UDP-N-acetylglucosamine (UDP-GlcNAc). The C-terminal domain catalyzes the transfer of acetyl group from acetyl coenzyme A to glucosamine-1-phosphate (GlcN-1-P) to produce N-acetylglucosamine-1-phosphate (GlcNAc-1-P), which is converted into UDP-GlcNAc by the transfer of uridine 5-monophosphate (from uridine 5-triphosphate), a reaction catalyzed by the N-terminal domain. The polypeptide is Bifunctional protein GlmU (Nitrosospira multiformis (strain ATCC 25196 / NCIMB 11849 / C 71)).